We begin with the raw amino-acid sequence, 114 residues long: Ribonuclease P protein component (114 aa).

It belongs to the RnpA family. As to quaternary structure, consists of a catalytic RNA component (M1 or rnpB) and a protein subunit.

The catalysed reaction is Endonucleolytic cleavage of RNA, removing 5'-extranucleotides from tRNA precursor.. In terms of biological role, RNaseP catalyzes the removal of the 5'-leader sequence from pre-tRNA to produce the mature 5'-terminus. It can also cleave other RNA substrates such as 4.5S RNA. The protein component plays an auxiliary but essential role in vivo by binding to the 5'-leader sequence and broadening the substrate specificity of the ribozyme. The polypeptide is Ribonuclease P protein component (Borrelia turicatae (strain 91E135)).